A 292-amino-acid polypeptide reads, in one-letter code: Ribosomal protein L11 methyltransferase (292 aa).

4 residues coordinate S-adenosyl-L-methionine: T144, G165, D187, and N229.

Belongs to the methyltransferase superfamily. PrmA family.

Its subcellular location is the cytoplasm. The enzyme catalyses L-lysyl-[protein] + 3 S-adenosyl-L-methionine = N(6),N(6),N(6)-trimethyl-L-lysyl-[protein] + 3 S-adenosyl-L-homocysteine + 3 H(+). In terms of biological role, methylates ribosomal protein L11. The polypeptide is Ribosomal protein L11 methyltransferase (Pseudomonas fluorescens (strain ATCC BAA-477 / NRRL B-23932 / Pf-5)).